The primary structure comprises 282 residues: ATP synthase gamma chain (282 aa).

The protein belongs to the ATPase gamma chain family. In terms of assembly, F-type ATPases have 2 components, CF(1) - the catalytic core - and CF(0) - the membrane proton channel. CF(1) has five subunits: alpha(3), beta(3), gamma(1), delta(1), epsilon(1). CF(0) has three main subunits: a, b and c.

It is found in the cell inner membrane. Produces ATP from ADP in the presence of a proton gradient across the membrane. The gamma chain is believed to be important in regulating ATPase activity and the flow of protons through the CF(0) complex. The sequence is that of ATP synthase gamma chain from Fusobacterium nucleatum subsp. nucleatum (strain ATCC 25586 / DSM 15643 / BCRC 10681 / CIP 101130 / JCM 8532 / KCTC 2640 / LMG 13131 / VPI 4355).